A 305-amino-acid polypeptide reads, in one-letter code: Methionyl-tRNA formyltransferase (305 aa).

108-111 (SLLP) provides a ligand contact to (6S)-5,6,7,8-tetrahydrofolate.

It belongs to the Fmt family.

The enzyme catalyses L-methionyl-tRNA(fMet) + (6R)-10-formyltetrahydrofolate = N-formyl-L-methionyl-tRNA(fMet) + (6S)-5,6,7,8-tetrahydrofolate + H(+). In terms of biological role, attaches a formyl group to the free amino group of methionyl-tRNA(fMet). The formyl group appears to play a dual role in the initiator identity of N-formylmethionyl-tRNA by promoting its recognition by IF2 and preventing the misappropriation of this tRNA by the elongation apparatus. The chain is Methionyl-tRNA formyltransferase from Thermus thermophilus (strain ATCC BAA-163 / DSM 7039 / HB27).